The sequence spans 206 residues: MSNRSRRQVRLSRALGIALTPKAQRIFEKRPYAPGEHGRTRRRAESDYAVRLREKQRLRAQYGISEKQLRAAYEKGTHTAGQTGNAMLTDLETRLDALVLRAGIARTTAQARQFVVHRHILVDGNIVDRPSYRVKPGQTIQVKPKSQTMVPFQIAAEGTHRDVLPPVPGYLDVNLASLKATLTRKPEPEEIPVQVNIQYVVEFYAR.

One can recognise an S4 RNA-binding domain in the interval 93–153; that stretch reads TRLDALVLRA…PKSQTMVPFQ (61 aa).

It belongs to the universal ribosomal protein uS4 family. In terms of assembly, part of the 30S ribosomal subunit. Contacts protein S5. The interaction surface between S4 and S5 is involved in control of translational fidelity.

One of the primary rRNA binding proteins, it binds directly to 16S rRNA where it nucleates assembly of the body of the 30S subunit. Functionally, with S5 and S12 plays an important role in translational accuracy. The polypeptide is Small ribosomal subunit protein uS4 (Bifidobacterium animalis subsp. lactis (strain AD011)).